A 260-amino-acid polypeptide reads, in one-letter code: Putative nudix hydrolase 6 (260 aa).

The Nudix hydrolase domain maps to 113–257; it reads PNHAADPIVS…SHFIDLLKES (145 aa). Residues 148–170 carry the Nudix box motif; that stretch reads GMVDAGEHVSQTLRREFAEEAMH. Residues Glu163 and Glu167 each contribute to the Mg(2+) site.

This sequence belongs to the Nudix hydrolase family. The cofactor is Mg(2+). It depends on Mn(2+) as a cofactor.

Functionally, probably mediates the hydrolysis of some nucleoside diphosphate derivatives. In Caenorhabditis elegans, this protein is Putative nudix hydrolase 6 (ndx-6).